Here is a 193-residue protein sequence, read N- to C-terminus: ATP-dependent Clp protease proteolytic subunit (193 aa).

Serine 98 (nucleophile) is an active-site residue. Residue histidine 123 is part of the active site.

Belongs to the peptidase S14 family. As to quaternary structure, fourteen ClpP subunits assemble into 2 heptameric rings which stack back to back to give a disk-like structure with a central cavity, resembling the structure of eukaryotic proteasomes.

It localises to the cytoplasm. The catalysed reaction is Hydrolysis of proteins to small peptides in the presence of ATP and magnesium. alpha-casein is the usual test substrate. In the absence of ATP, only oligopeptides shorter than five residues are hydrolyzed (such as succinyl-Leu-Tyr-|-NHMec, and Leu-Tyr-Leu-|-Tyr-Trp, in which cleavage of the -Tyr-|-Leu- and -Tyr-|-Trp bonds also occurs).. Functionally, cleaves peptides in various proteins in a process that requires ATP hydrolysis. Has a chymotrypsin-like activity. Plays a major role in the degradation of misfolded proteins. The protein is ATP-dependent Clp protease proteolytic subunit of Mannheimia succiniciproducens (strain KCTC 0769BP / MBEL55E).